The following is a 148-amino-acid chain: UPF0179 protein UNCMA_27840 (148 aa).

It belongs to the UPF0179 family.

The protein is UPF0179 protein UNCMA_27840 of Methanocella arvoryzae (strain DSM 22066 / NBRC 105507 / MRE50).